The primary structure comprises 1313 residues: Ataxin-2 (1313 aa).

Residues 1 to 12 show a composition bias toward low complexity; sequence MRSAAAAPRSPA. The disordered stretch occupies residues 1–255; that stretch reads MRSAAAAPRS…RNSNKGLPQS (255 aa). Positions 48 to 65 are enriched in pro residues; the sequence is GPYPSAAPPPPGPGPPPS. Low complexity-rich tracts occupy residues 104 to 114, 141 to 154, 166 to 187, and 204 to 234; these read FVVLLLPLASP, ARPAPGCPRPACEP, QQQQQQQQQQQQQQQQQQQQQQ, and LLASPAAAPSPSSSSVSSSSATAPSSVVAAT. Residues 235–244 are compositionally biased toward gly residues; it reads SGGGRPGLGR. Ser-248 is subject to Phosphoserine. In terms of domain architecture, Sm spans 267–344; that stretch reads RMVHILTSVV…FVVVQFKDMD (78 aa). Phosphoserine occurs at positions 393, 466, 478, 508, and 554. Composition is skewed to basic and acidic residues over residues 459–471 and 478–492; these read ALENDDRSEEEKY and SSEREGHSINTRENK. Disordered stretches follow at residues 459-954 and 1137-1219; these read ALEN…HQQP and NATL…NSFP. Polar residues predominate over residues 508–544; that stretch reads SGRQNSPRMGQPGSGSMPSRSTSHTSDFNPNSGSDQR. Residues 552–562 show a composition bias toward pro residues; sequence WPSPCPSPSSR. Over residues 563 to 581 the composition is skewed to low complexity; that stretch reads PPSRYQSGPNSLPPRAATP. Residues 582 to 598 are compositionally biased toward pro residues; sequence TRPPSRPPSRPSRPPSH. A Phosphoserine modification is found at Ser-624. Positions 627 to 637 are enriched in basic residues; it reads AQRHPRNHRVS. Arg-640 carries the post-translational modification Asymmetric dimethylarginine; alternate. Position 640 is an omega-N-methylarginine; alternate (Arg-640). Phosphoserine is present on Ser-642. Over residues 666–681 the composition is skewed to low complexity; that stretch reads TSPSGGTWSSVVSGVP. Ser-684 bears the Phosphoserine mark. Polar residues predominate over residues 693 to 703; sequence PRQNSIGNTPS. Ser-728 bears the Phosphoserine mark. Phosphothreonine is present on Thr-741. Over residues 768-777 the composition is skewed to polar residues; it reads PNETSPSFSK. Residues Ser-772 and Ser-784 each carry the phosphoserine modification. Basic and acidic residues predominate over residues 788–804; the sequence is SEHRKQIDDLKKFKNDF. Residues 807-820 show a composition bias toward polar residues; that stretch reads QPSSTSESMDQLLN. Positions 821–844 are enriched in basic and acidic residues; the sequence is KNREGEKSRDLIKDKIEPSAKDSF. Positions 847-871 are enriched in low complexity; the sequence is NSSSNCTSGSSKPNSPSISPSILSN. A phosphoserine mark is found at Ser-856, Ser-857, Ser-861, Ser-865, Ser-867, Ser-888, and Ser-889. Residues 880-891 show a composition bias toward polar residues; that stretch reads VTSQGVQTSSPA. A Glycyl lysine isopeptide (Lys-Gly) (interchain with G-Cter in SUMO2) cross-link involves residue Lys-893. Residues 893-910 show a composition bias toward basic and acidic residues; the sequence is KQEKDDKEEKKDAAEQVR. Composition is skewed to low complexity over residues 925-936 and 1155-1192; these read SFSQPKPSTTPT and GQQQSQHGGSHPAPSPVQHHQHQAAQALHLASPQQQSA. Positions 1206 to 1219 are enriched in polar residues; it reads TPASNTQSPQNSFP.

Belongs to the ataxin-2 family. In terms of assembly, monomer. Can also form homodimers. Interacts with TARDBP; the interaction is RNA-dependent. Interacts with RBFOX1. Interacts with polyribosomes. Interacts with SH3GL2 and SH3GL3. Interacts with SH3KBP1 and CBL. Interacts with EGFR. Interacts with ATXN2L. Expressed in the brain, heart, liver, skeletal muscle, pancreas and placenta. Isoform 1 is predominant in the brain and spinal cord. Isoform 4 is more abundant in the cerebellum. In the brain, broadly expressed in the amygdala, caudate nucleus, corpus callosum, hippocampus, hypothalamus, substantia nigra, subthalamic nucleus and thalamus.

Its subcellular location is the cytoplasm. In terms of biological role, involved in EGFR trafficking, acting as negative regulator of endocytic EGFR internalization at the plasma membrane. The protein is Ataxin-2 (ATXN2) of Homo sapiens (Human).